Here is a 350-residue protein sequence, read N- to C-terminus: MNKSYSLREIVSTLGGELLGKDDVLISRVASLANAQPGQISFLTDSKYRSVLATTNASAVILTPQNRDITALPRILTDNPYAYFAKVSDLLNPKPEYVAGVDDTAVIAPSAQVPASCTIMAKAVVGANVVLGEHVVVHPGCVIGEGVEIGAHSVLHANVTIYHHCMIGERCNIFSGSVIGGDGFGYAPEEGRWVKIPQVGRVVIEHDVDIGANTTIDRGAIDDTIIHEGCKIDNLVQIGHNCRIGAHSVIAGCVGIAGSAVLGKHCRIGGAAMILGHLEIADGVTVSPGSMITRSLMKAGTYTALMPFQSHDEWLRTAAGIRRLGELAERVKQLEKQLAPQQVSGIQRDK.

His240 (proton acceptor) is an active-site residue.

The protein belongs to the transferase hexapeptide repeat family. LpxD subfamily. In terms of assembly, homotrimer.

It carries out the reaction a UDP-3-O-[(3R)-3-hydroxyacyl]-alpha-D-glucosamine + a (3R)-hydroxyacyl-[ACP] = a UDP-2-N,3-O-bis[(3R)-3-hydroxyacyl]-alpha-D-glucosamine + holo-[ACP] + H(+). It participates in bacterial outer membrane biogenesis; LPS lipid A biosynthesis. Functionally, catalyzes the N-acylation of UDP-3-O-acylglucosamine using 3-hydroxyacyl-ACP as the acyl donor. Is involved in the biosynthesis of lipid A, a phosphorylated glycolipid that anchors the lipopolysaccharide to the outer membrane of the cell. This chain is UDP-3-O-acylglucosamine N-acyltransferase, found in Methylobacillus flagellatus (strain ATCC 51484 / DSM 6875 / VKM B-1610 / KT).